The chain runs to 271 residues: Phycocyanobilin lyase subunit alpha (271 aa).

The protein belongs to the CpcE/RpcE/PecE family. In terms of assembly, cpcE and CpcF associate to form a lyase.

In terms of biological role, required for the chromophorylation of the cpcA1 gene product. This is Phycocyanobilin lyase subunit alpha (cpcE1) from Pseudanabaena tenuis (strain PCC 7409).